A 244-amino-acid polypeptide reads, in one-letter code: Phosphoadenosine 5'-phosphosulfate reductase (244 aa).

Residue Cys239 is the Nucleophile; cysteine thiosulfonate intermediate of the active site.

It belongs to the PAPS reductase family. CysH subfamily.

It is found in the cytoplasm. It catalyses the reaction [thioredoxin]-disulfide + sulfite + adenosine 3',5'-bisphosphate + 2 H(+) = [thioredoxin]-dithiol + 3'-phosphoadenylyl sulfate. It functions in the pathway sulfur metabolism; hydrogen sulfide biosynthesis; sulfite from sulfate: step 3/3. Functionally, catalyzes the formation of sulfite from phosphoadenosine 5'-phosphosulfate (PAPS) using thioredoxin as an electron donor. The chain is Phosphoadenosine 5'-phosphosulfate reductase from Yersinia pseudotuberculosis serotype O:1b (strain IP 31758).